Reading from the N-terminus, the 179-residue chain is MARLKELYTKELAPKLKEELGLANVMEVPRITKITINMGVGEAVGDKKVLENAVNDLVKIAGQKVVVTKSRKSIAGFKIRDGWPIGCKVTLRKDRMYEFLDRLIAVAIPRIRDFRGISPKQFDGRGNFSMGVTEQIIFPEIDYDKVDRLRGLDICITTTARTDEEGRALLKAFNFPFKG.

The protein belongs to the universal ribosomal protein uL5 family. Part of the 50S ribosomal subunit; part of the 5S rRNA/L5/L18/L25 subcomplex. Contacts the 5S rRNA and the P site tRNA. Forms a bridge to the 30S subunit in the 70S ribosome.

Functionally, this is one of the proteins that bind and probably mediate the attachment of the 5S RNA into the large ribosomal subunit, where it forms part of the central protuberance. In the 70S ribosome it contacts protein S13 of the 30S subunit (bridge B1b), connecting the 2 subunits; this bridge is implicated in subunit movement. Contacts the P site tRNA; the 5S rRNA and some of its associated proteins might help stabilize positioning of ribosome-bound tRNAs. This Cellvibrio japonicus (strain Ueda107) (Pseudomonas fluorescens subsp. cellulosa) protein is Large ribosomal subunit protein uL5.